The sequence spans 213 residues: Heat shock protein 30C (213 aa).

Residues 61–80 (SKDTEMRRITDQNRQSRESE) show a composition bias toward basic and acidic residues. 2 disordered regions span residues 61–93 (SKDTEMRRITDQNRQSRESEGTSPNSGKDGKDH) and 174–213 (ALPPAPETPIPISMDTAPRDAQELPPDAQTSNAEGDQKVD). In terms of domain architecture, sHSP spans 76–188 (SRESEGTSPN…PETPIPISMD (113 aa)).

This sequence belongs to the small heat shock protein (HSP20) family.

This Xenopus laevis (African clawed frog) protein is Heat shock protein 30C (hsp30c).